A 546-amino-acid chain; its full sequence is Glucose-6-phosphate isomerase (546 aa).

The active-site Proton donor is the Glu352. Active-site residues include His383 and Lys511.

Belongs to the GPI family.

It localises to the cytoplasm. The enzyme catalyses alpha-D-glucose 6-phosphate = beta-D-fructose 6-phosphate. It functions in the pathway carbohydrate biosynthesis; gluconeogenesis. The protein operates within carbohydrate degradation; glycolysis; D-glyceraldehyde 3-phosphate and glycerone phosphate from D-glucose: step 2/4. In terms of biological role, catalyzes the reversible isomerization of glucose-6-phosphate to fructose-6-phosphate. The polypeptide is Glucose-6-phosphate isomerase (Paramagnetospirillum magneticum (strain ATCC 700264 / AMB-1) (Magnetospirillum magneticum)).